Consider the following 389-residue polypeptide: Phospho-N-acetylmuramoyl-pentapeptide-transferase (389 aa).

A run of 10 helical transmembrane segments spans residues 25–45 (RAVM…PWVI), 73–93 (TMGG…WADL), 97–117 (FIWI…VDDY), 134–154 (FFWQ…SVSE), 190–210 (VSYP…IVGS), 222–242 (GLVI…AYVM), 258–278 (GAGE…AFLW), 286–306 (VFMG…IAVI), 311–331 (IVLF…MLQV), and 366–386 (QVVV…LSSL).

The protein belongs to the glycosyltransferase 4 family. MraY subfamily. The cofactor is Mg(2+).

It localises to the cell inner membrane. It catalyses the reaction UDP-N-acetyl-alpha-D-muramoyl-L-alanyl-gamma-D-glutamyl-meso-2,6-diaminopimeloyl-D-alanyl-D-alanine + di-trans,octa-cis-undecaprenyl phosphate = di-trans,octa-cis-undecaprenyl diphospho-N-acetyl-alpha-D-muramoyl-L-alanyl-D-glutamyl-meso-2,6-diaminopimeloyl-D-alanyl-D-alanine + UMP. It participates in cell wall biogenesis; peptidoglycan biosynthesis. Its function is as follows. Catalyzes the initial step of the lipid cycle reactions in the biosynthesis of the cell wall peptidoglycan: transfers peptidoglycan precursor phospho-MurNAc-pentapeptide from UDP-MurNAc-pentapeptide onto the lipid carrier undecaprenyl phosphate, yielding undecaprenyl-pyrophosphoryl-MurNAc-pentapeptide, known as lipid I. In Polynucleobacter necessarius subsp. necessarius (strain STIR1), this protein is Phospho-N-acetylmuramoyl-pentapeptide-transferase.